The sequence spans 308 residues: MAVAMDNAILENILRQVRPLIGQGKVADYIPALATVDGSRLGIAICTVDGQLFQAGDAQERFSIQSISKVLSLVVAMRHYSEEEIWQRVGKDPSGSPFNSLVQLEMEQGIPRNPFINAGALVVCDMLQGRLSAPRQRMLEVVRGLSGVSDISYDTVVARSEFEHSARNAAIAWLMKSFGNFHHDVTTVLQNYFHYCALKMSCVELARTFVFLANQGKAIHIDEPVVTPMQARQINALMATSGIYQNAGEFAWRVGLPAKSGVGGGIVAIVPHEMAIAVWSPELDDAGNSLAGIAVLEQLTKQLGRSVY.

Substrate-binding residues include serine 66, asparagine 117, glutamate 161, asparagine 168, tyrosine 192, tyrosine 244, and valine 262.

The protein belongs to the glutaminase family. In terms of assembly, homotetramer.

It carries out the reaction L-glutamine + H2O = L-glutamate + NH4(+). The chain is Glutaminase from Shigella dysenteriae serotype 1 (strain Sd197).